A 473-amino-acid polypeptide reads, in one-letter code: Cysteine--tRNA ligase (473 aa).

Cys30 contributes to the Zn(2+) binding site. The 'HIGH' region signature appears at 32–42; that stretch reads MTVYDYCHIGH. The Zn(2+) site is built by Cys213, His238, and Glu242. The 'KMSKS' region signature appears at 270–274; the sequence is KMSKS. Position 273 (Lys273) interacts with ATP.

It belongs to the class-I aminoacyl-tRNA synthetase family. Monomer. Requires Zn(2+) as cofactor.

The protein resides in the cytoplasm. The catalysed reaction is tRNA(Cys) + L-cysteine + ATP = L-cysteinyl-tRNA(Cys) + AMP + diphosphate. The polypeptide is Cysteine--tRNA ligase (Acinetobacter baylyi (strain ATCC 33305 / BD413 / ADP1)).